The sequence spans 86 residues: Large ribosomal subunit protein eL43 (86 aa).

The C4-type zinc-finger motif lies at 38-60; the sequence is CPFCGHKGKVYRLSTGVWACKKC.

It belongs to the eukaryotic ribosomal protein eL43 family. It depends on Zn(2+) as a cofactor.

This Desulfurococcus amylolyticus (strain DSM 18924 / JCM 16383 / VKM B-2413 / 1221n) (Desulfurococcus kamchatkensis) protein is Large ribosomal subunit protein eL43.